Reading from the N-terminus, the 362-residue chain is 3-dehydroquinate synthase (362 aa).

NAD(+) is bound by residues 71–76 (DGEQYK), 105–109 (GVVGD), 129–130 (TT), Lys142, Lys151, and 169–172 (CLKT). 3 residues coordinate Zn(2+): Glu184, His247, and His264.

This sequence belongs to the sugar phosphate cyclases superfamily. Dehydroquinate synthase family. Co(2+) serves as cofactor. It depends on Zn(2+) as a cofactor. Requires NAD(+) as cofactor.

The protein resides in the cytoplasm. The enzyme catalyses 7-phospho-2-dehydro-3-deoxy-D-arabino-heptonate = 3-dehydroquinate + phosphate. It functions in the pathway metabolic intermediate biosynthesis; chorismate biosynthesis; chorismate from D-erythrose 4-phosphate and phosphoenolpyruvate: step 2/7. Functionally, catalyzes the conversion of 3-deoxy-D-arabino-heptulosonate 7-phosphate (DAHP) to dehydroquinate (DHQ). This Shigella dysenteriae serotype 1 (strain Sd197) protein is 3-dehydroquinate synthase.